The sequence spans 181 residues: TATA-box-binding protein (181 aa).

2 tandem repeats follow at residues Ile-7–Leu-83 and Val-98–Leu-173.

This sequence belongs to the TBP family.

In terms of biological role, general factor that plays a role in the activation of archaeal genes transcribed by RNA polymerase. Binds specifically to the TATA box promoter element which lies close to the position of transcription initiation. This is TATA-box-binding protein from Methanococcus vannielii (strain ATCC 35089 / DSM 1224 / JCM 13029 / OCM 148 / SB).